We begin with the raw amino-acid sequence, 143 residues long: D-aminoacyl-tRNA deacylase (143 aa).

The short motif at 135-136 (GP) is the Gly-cisPro motif, important for rejection of L-amino acids element.

The protein belongs to the DTD family. As to quaternary structure, homodimer.

The protein localises to the cytoplasm. It catalyses the reaction glycyl-tRNA(Ala) + H2O = tRNA(Ala) + glycine + H(+). It carries out the reaction a D-aminoacyl-tRNA + H2O = a tRNA + a D-alpha-amino acid + H(+). An aminoacyl-tRNA editing enzyme that deacylates mischarged D-aminoacyl-tRNAs. Also deacylates mischarged glycyl-tRNA(Ala), protecting cells against glycine mischarging by AlaRS. Acts via tRNA-based rather than protein-based catalysis; rejects L-amino acids rather than detecting D-amino acids in the active site. By recycling D-aminoacyl-tRNA to D-amino acids and free tRNA molecules, this enzyme counteracts the toxicity associated with the formation of D-aminoacyl-tRNA entities in vivo and helps enforce protein L-homochirality. The sequence is that of D-aminoacyl-tRNA deacylase from Mycobacterium marinum (strain ATCC BAA-535 / M).